The chain runs to 187 residues: Large ribosomal subunit protein uL5 (187 aa).

It belongs to the universal ribosomal protein uL5 family. As to quaternary structure, part of the 50S ribosomal subunit; part of the 5S rRNA/L5/L18/L25 subcomplex. Contacts the 5S rRNA and the P site tRNA. Forms a bridge to the 30S subunit in the 70S ribosome.

In terms of biological role, this is one of the proteins that bind and probably mediate the attachment of the 5S RNA into the large ribosomal subunit, where it forms part of the central protuberance. In the 70S ribosome it contacts protein S13 of the 30S subunit (bridge B1b), connecting the 2 subunits; this bridge is implicated in subunit movement. Contacts the P site tRNA; the 5S rRNA and some of its associated proteins might help stabilize positioning of ribosome-bound tRNAs. In Mycolicibacterium paratuberculosis (strain ATCC BAA-968 / K-10) (Mycobacterium paratuberculosis), this protein is Large ribosomal subunit protein uL5.